The following is a 228-amino-acid chain: Response regulator MprA (228 aa).

The region spanning 2–116 (RILAVDDDRA…ELLARIRALL (115 aa)) is the Response regulatory domain. A 4-aspartylphosphate modification is found at aspartate 46. The segment at residues 127–225 (SVAMSFSDLT…VRGVGYVLRE (99 aa)) is a DNA-binding region (ompR/PhoB-type).

Phosphorylated and dephosphorylated by MprB.

The protein localises to the cytoplasm. Its function is as follows. Member of the two-component regulatory system MprB/MprA which contributes to maintaining a balance among several systems involved in stress resistance and is required for establishment and maintenance of persistent infection in the host. Functions as a transcriptional regulator that recognizes a 19-bp nucleotide motif comprizing two loosely conserved 8-bp direct DNA-binding motif repeats separated by a 3-bp spacer region. This is Response regulator MprA (mprA) from Mycobacterium leprae (strain TN).